Here is a 136-residue protein sequence, read N- to C-terminus: UPF0216 protein PF0452 (136 aa).

The protein belongs to the UPF0216 family.

This is UPF0216 protein PF0452 from Pyrococcus furiosus (strain ATCC 43587 / DSM 3638 / JCM 8422 / Vc1).